Consider the following 286-residue polypeptide: Translocon-associated protein subunit alpha (286 aa).

The N-terminal stretch at 1–18 (MRLLPRLLLLLLLVFPAT) is a signal peptide. Over 19-207 (VLFRGGPRGL…EREDGLDGET (189 aa)) the chain is Lumenal. The segment covering 39–75 (EETVEDSIIEDEDDEAEVEEDEPTDLVEDKEEEDVSG) has biased composition (acidic residues). Positions 39 to 83 (EETVEDSIIEDEDDEAEVEEDEPTDLVEDKEEEDVSGEPEASPSA) are disordered. N-linked (GlcNAc...) asparagine glycosylation is found at Asn136 and Asn191. Residues 208–228 (IFMYMFLAGLGLLVIVGLHQL) traverse the membrane as a helical segment. Topologically, residues 229–286 (LESRKRKRPIQKVEMGTSSQNDVDMSWIPQETLNQINKASPRRLPRKRAQKRSVGSDE) are cytoplasmic. The residue at position 247 (Ser247) is a Phosphoserine. Thr260 carries the post-translational modification Phosphothreonine. Residues 261 to 286 (LNQINKASPRRLPRKRAQKRSVGSDE) form a disordered region. At Ser268 the chain carries Phosphoserine. The span at 268-279 (SPRRLPRKRAQK) shows a compositional bias: basic residues.

The protein belongs to the TRAP-alpha family. In terms of assembly, heterotetramer of TRAP-alpha, TRAP-beta, TRAP-delta and TRAP-gamma. Interacts with palmitoylated calnexin (CALX), the interaction is required for efficient folding of glycosylated proteins.

Its subcellular location is the endoplasmic reticulum membrane. Functionally, TRAP proteins are part of a complex whose function is to bind calcium to the ER membrane and thereby regulate the retention of ER resident proteins. May be involved in the recycling of the translocation apparatus after completion of the translocation process or may function as a membrane-bound chaperone facilitating folding of translocated proteins. This chain is Translocon-associated protein subunit alpha (SSR1), found in Homo sapiens (Human).